The following is a 282-amino-acid chain: Pantothenate synthetase (282 aa).

Position 32–39 (32–39 (MGALHEGH)) interacts with ATP. The active-site Proton donor is H39. Q63 is a binding site for (R)-pantoate. Q63 is a beta-alanine binding site. 149–152 (GEKD) provides a ligand contact to ATP. Q155 contributes to the (R)-pantoate binding site. ATP is bound by residues V178 and 186-189 (LSSR).

The protein belongs to the pantothenate synthetase family. As to quaternary structure, homodimer.

It is found in the cytoplasm. It catalyses the reaction (R)-pantoate + beta-alanine + ATP = (R)-pantothenate + AMP + diphosphate + H(+). Its pathway is cofactor biosynthesis; (R)-pantothenate biosynthesis; (R)-pantothenate from (R)-pantoate and beta-alanine: step 1/1. Functionally, catalyzes the condensation of pantoate with beta-alanine in an ATP-dependent reaction via a pantoyl-adenylate intermediate. In Paracoccus denitrificans (strain Pd 1222), this protein is Pantothenate synthetase.